The chain runs to 558 residues: Dihydroxy-acid dehydratase (558 aa).

Asp78 is a Mg(2+) binding site. Residue Cys119 participates in [2Fe-2S] cluster binding. Mg(2+) contacts are provided by Asp120 and Lys121. Lys121 carries the post-translational modification N6-carboxylysine. A [2Fe-2S] cluster-binding site is contributed by Cys192. Glu446 serves as a coordination point for Mg(2+). Ser472 acts as the Proton acceptor in catalysis.

The protein belongs to the IlvD/Edd family. In terms of assembly, homodimer. It depends on [2Fe-2S] cluster as a cofactor. Mg(2+) serves as cofactor.

It catalyses the reaction (2R)-2,3-dihydroxy-3-methylbutanoate = 3-methyl-2-oxobutanoate + H2O. The enzyme catalyses (2R,3R)-2,3-dihydroxy-3-methylpentanoate = (S)-3-methyl-2-oxopentanoate + H2O. Its pathway is amino-acid biosynthesis; L-isoleucine biosynthesis; L-isoleucine from 2-oxobutanoate: step 3/4. It participates in amino-acid biosynthesis; L-valine biosynthesis; L-valine from pyruvate: step 3/4. Functions in the biosynthesis of branched-chain amino acids. Catalyzes the dehydration of (2R,3R)-2,3-dihydroxy-3-methylpentanoate (2,3-dihydroxy-3-methylvalerate) into 2-oxo-3-methylpentanoate (2-oxo-3-methylvalerate) and of (2R)-2,3-dihydroxy-3-methylbutanoate (2,3-dihydroxyisovalerate) into 2-oxo-3-methylbutanoate (2-oxoisovalerate), the penultimate precursor to L-isoleucine and L-valine, respectively. This is Dihydroxy-acid dehydratase from Campylobacter jejuni subsp. jejuni serotype O:2 (strain ATCC 700819 / NCTC 11168).